The chain runs to 505 residues: MSSKVRVRFAPSPTGPLHIGGVRTALYNYLFAKKHGGDFVLRIEDTDQNRYVEGAEDYIIEALNWCGIPYDEGPGKEKGFGPYRQSERKDQYREYAEKLIKSGNAYYAFDTSDELDGHRKDHEEKGKTFIYNWHNRQKLKNSLSLSQEEVQEKLDGEEDYVIRFKSPQDETLHLKDVIRGDMEIDTNILDDKVLFKSDGMPTYHLANIVDDHLMEITHVIRGEEWLPSLALHYMLYRAFGWNAPQFAHLPLILKPQGKGKLSKRDGEKMGFPVFPLEWKDPESGDISAGYKEEGYFPEAVVNMLAFLGWNPGTEEEFFGLEDLTKAFELERVHKGGAKFDPEKTKWFQQHYIQLADNEFLADEFEKRLEKKEIEADKIYISEVVALIKERVVFVEDFWDQGYFFFIAPTSFDPKDSKKAWKEGTSELMTELNEYLKSIDNFEAEHLQETVKGWIKSKEIGFGKVMMPLRIALVGALQGPDLYKIAEFIGKEATLKRIQKAVDTLK.

The 'HIGH' region signature appears at 11–21 (PSPTGPLHIGG). Residues 260–264 (KLSKR) carry the 'KMSKS' region motif. K263 is a binding site for ATP.

The protein belongs to the class-I aminoacyl-tRNA synthetase family. Glutamate--tRNA ligase type 1 subfamily. Monomer.

Its subcellular location is the cytoplasm. The catalysed reaction is tRNA(Glu) + L-glutamate + ATP = L-glutamyl-tRNA(Glu) + AMP + diphosphate. Functionally, catalyzes the attachment of glutamate to tRNA(Glu) in a two-step reaction: glutamate is first activated by ATP to form Glu-AMP and then transferred to the acceptor end of tRNA(Glu). In Christiangramia forsetii (strain DSM 17595 / CGMCC 1.15422 / KT0803) (Gramella forsetii), this protein is Glutamate--tRNA ligase.